The chain runs to 313 residues: Porphobilinogen deaminase (313 aa).

C242 is subject to S-(dipyrrolylmethanemethyl)cysteine.

The protein belongs to the HMBS family. As to quaternary structure, monomer. The cofactor is dipyrromethane.

The catalysed reaction is 4 porphobilinogen + H2O = hydroxymethylbilane + 4 NH4(+). The protein operates within porphyrin-containing compound metabolism; protoporphyrin-IX biosynthesis; coproporphyrinogen-III from 5-aminolevulinate: step 2/4. Its function is as follows. Tetrapolymerization of the monopyrrole PBG into the hydroxymethylbilane pre-uroporphyrinogen in several discrete steps. The sequence is that of Porphobilinogen deaminase from Pseudomonas aeruginosa (strain UCBPP-PA14).